We begin with the raw amino-acid sequence, 513 residues long: DNA damage-binding protein CMR1 (513 aa).

A compositionally biased stretch (basic and acidic residues) spans 35 to 45; the sequence is RSEAGIEDHRK. A disordered region spans residues 35-103; that stretch reads RSEAGIEDHR…TAQNVKQEEE (69 aa). WD repeat units follow at residues 183–224, 237–277, 329–369, 386–425, 438–477, and 478–513; these read IVHE…PDPE, LFSR…SDEL, LSDK…AKPD, NSRL…PSEL, GRWV…LSHL, and ETST…APQE.

The protein belongs to the WD repeat DDB2/WDR76 family.

Its function is as follows. DNA-binding protein that binds to both single- and double-stranded DNA. Binds preferentially to UV-damaged DNA. May be involved in DNA-metabolic processes. The chain is DNA damage-binding protein CMR1 from Eremothecium gossypii (strain ATCC 10895 / CBS 109.51 / FGSC 9923 / NRRL Y-1056) (Yeast).